The chain runs to 347 residues: Quinolinate synthase (347 aa).

Iminosuccinate contacts are provided by His-47 and Ser-68. Cys-113 is a [4Fe-4S] cluster binding site. Iminosuccinate contacts are provided by residues 139–141 and Ser-156; that span reads YAN. Cys-200 provides a ligand contact to [4Fe-4S] cluster. Iminosuccinate-binding positions include 226–228 and Thr-243; that span reads HPE. A [4Fe-4S] cluster-binding site is contributed by Cys-297.

This sequence belongs to the quinolinate synthase family. Type 1 subfamily. [4Fe-4S] cluster serves as cofactor.

The protein localises to the cytoplasm. It carries out the reaction iminosuccinate + dihydroxyacetone phosphate = quinolinate + phosphate + 2 H2O + H(+). It functions in the pathway cofactor biosynthesis; NAD(+) biosynthesis; quinolinate from iminoaspartate: step 1/1. Catalyzes the condensation of iminoaspartate with dihydroxyacetone phosphate to form quinolinate. The protein is Quinolinate synthase of Salmonella paratyphi A (strain ATCC 9150 / SARB42).